The following is a 120-amino-acid chain: Protein crumbs homolog 3 (120 aa).

The N-terminal stretch at 1–26 (MANPGLGLLLALGLPFLLARWGRAWG) is a signal peptide. At 27 to 59 (QIQTTSANENSTVLPSSTSSSSDGNLRPEAITA) the chain is on the extracellular side. A glycan (N-linked (GlcNAc...) asparagine) is linked at asparagine 36. The chain crosses the membrane as a helical span at residues 60–80 (IIVVFSLLAALLLAVGLALLV). At 81–120 (RKLREKRQTEGTYRPSSEEQVGARVPPTPNLKLPPEERLI) the chain is on the cytoplasmic side. Residues 84-120 (REKRQTEGTYRPSSEEQVGARVPPTPNLKLPPEERLI) form an interaction with EPB41L5 region. A disordered region spans residues 87–120 (RQTEGTYRPSSEEQVGARVPPTPNLKLPPEERLI). A compositionally biased stretch (polar residues) spans 90 to 99 (EGTYRPSSEE). The PDZ-binding motif lies at 117 to 120 (ERLI).

As to quaternary structure, component of a complex composed of CRB3, PALS1 and PATJ. Interacts (via C-terminus) with PALS1 (via PDZ domain). Interacts with PARD6A. Interacts (via intracellular domain) with EPB41L5. Interacts with WDR83. Preferentially expressed in epithelial tissues. Expressed at high levels in lung, kidney, and colon. Expressed at high levels in retina, colon and mammary glands. Moderately expressed in liver, spleen, pancreas and prostate. Moderately to weakly expressed in the placenta. Weakly expressed in skeletal muscle and small intestine.

The protein resides in the apical cell membrane. It localises to the cell junction. The protein localises to the tight junction. Its function is as follows. Involved in the establishment of cell polarity in mammalian epithelial cells. Regulates the morphogenesis of tight junctions. Involved in promoting phosphorylation and cytoplasmic retention of transcriptional coactivators YAP1 and WWTR1/TAZ which leads to suppression of TGFB1-dependent transcription of target genes such as CCN2/CTGF, SERPINE1/PAI1, SNAI1/SNAIL1 and SMAD7. This Homo sapiens (Human) protein is Protein crumbs homolog 3.